Consider the following 67-residue polypeptide: Peptide Hp1036 (67 aa).

A signal peptide spans 1-23 (MKTQFAILLITLVLFQMFSQSDA). Phe36 carries the post-translational modification Phenylalanine amide. A propeptide spanning residues 40–67 (GLNDLSDLDELFDGEISEADVDFLREIM) is cleaved from the precursor.

Belongs to the non-disulfide-bridged peptide (NDBP) superfamily. Short antimicrobial peptide (group 4) family. As to expression, expressed by the venom gland.

Its subcellular location is the secreted. It is found in the target cell membrane. Its function is as follows. Amphipathic peptide with antibacterial activities. Shows antiviral activities against the herpes simplex virus type-1. It potently inhibits the initial infection by provoking the rupture of viral envelop and the dissociation of proteins from the virions (EC(50) is 0.43 uM). It also effectively inhibits viral attachment (EC(50) is 2.87 uM), viral entry (EC(50) is 4.29 uM) and viral proliferation after infection (EC(50) is 7.86). Morever, it enters mammalian tested cells (Vero) and reduces the intracellular infectivity. This Heterometrus petersii (Asian forest scorpion) protein is Peptide Hp1036.